Reading from the N-terminus, the 466-residue chain is Uronate isomerase (466 aa).

This sequence belongs to the metallo-dependent hydrolases superfamily. Uronate isomerase family.

The catalysed reaction is D-glucuronate = D-fructuronate. It carries out the reaction aldehydo-D-galacturonate = keto-D-tagaturonate. The protein operates within carbohydrate metabolism; pentose and glucuronate interconversion. The protein is Uronate isomerase of Rhizorhabdus wittichii (strain DSM 6014 / CCUG 31198 / JCM 15750 / NBRC 105917 / EY 4224 / RW1) (Sphingomonas wittichii).